We begin with the raw amino-acid sequence, 415 residues long: L-cysteine:1D-myo-inositol 2-amino-2-deoxy-alpha-D-glucopyranoside ligase (415 aa).

Cys-43 provides a ligand contact to Zn(2+). Residues 43 to 46 (CGIT), Thr-58, and 81 to 83 (NIT) contribute to the L-cysteinyl-5'-AMP site. A 'HIGH' region motif is present at residues 45–55 (ITPYDATHLGH). The 'ERGGDP' region signature appears at 187–192 (ERGGDP). Trp-227 provides a ligand contact to L-cysteinyl-5'-AMP. Cys-231 lines the Zn(2+) pocket. 249–251 (GSD) serves as a coordination point for L-cysteinyl-5'-AMP. His-256 is a binding site for Zn(2+). Ile-283 is a binding site for L-cysteinyl-5'-AMP. The short motif at 289 to 293 (KMSKS) is the 'KMSKS' region element.

Belongs to the class-I aminoacyl-tRNA synthetase family. MshC subfamily. In terms of assembly, monomer. Zn(2+) serves as cofactor.

It catalyses the reaction 1D-myo-inositol 2-amino-2-deoxy-alpha-D-glucopyranoside + L-cysteine + ATP = 1D-myo-inositol 2-(L-cysteinylamino)-2-deoxy-alpha-D-glucopyranoside + AMP + diphosphate + H(+). Catalyzes the ATP-dependent condensation of GlcN-Ins and L-cysteine to form L-Cys-GlcN-Ins. This Mycobacterium sp. (strain JLS) protein is L-cysteine:1D-myo-inositol 2-amino-2-deoxy-alpha-D-glucopyranoside ligase.